Reading from the N-terminus, the 192-residue chain is MSDKPNAVSSHTTPDVPEVAATPELSTGICAGDYRAALRRHPAGVTVVTLDSGTGPVGFTATSFSSVSLEPPLVSFNIAETSSSINALKAAESLVIHLLGEHQQHLAQRFARSADQRFADESLWAVLDTGEPVLHGTPSWMRVKVDQLIPVGDHTLVIGLVTRVHAEEDDESAAAPLLYHEGKYYRPTPLGQ.

The interval 1–20 (MSDKPNAVSSHTTPDVPEVA) is disordered. Residues 60-63 (TATS), 77-84 (NIAETSSS), alanine 111, and arginine 117 each bind FMN.

Belongs to the non-flavoprotein flavin reductase family.

The protein localises to the cytoplasm. It catalyses the reaction FMNH2 + NAD(+) = FMN + NADH + 2 H(+). The protein operates within sulfur metabolism; dibenzothiophene degradation. Its function is as follows. An NADH:FMN oxidoreductase which supplies reduced FMN for the '4S' desulfurization pathway that removes covalently bound sulfur from dibenzothiophene (DBT) without breaking carbon-carbon bonds. Provides DszA and DszC (DBTO2-monooxygenase and DBT-monooxygenase respectively) with reduced flavin (FMN). This is NADH:FMN oxidoreductase from Rhodococcus erythropolis (Arthrobacter picolinophilus).